A 242-amino-acid polypeptide reads, in one-letter code: UPF0157 protein PA4798 (242 aa).

The interval 215–242 (AGAESTPGGPADTAYFESLRSRVSKPQD) is disordered.

The protein belongs to the UPF0157 (GrpB) family.

This chain is UPF0157 protein PA4798, found in Pseudomonas aeruginosa (strain ATCC 15692 / DSM 22644 / CIP 104116 / JCM 14847 / LMG 12228 / 1C / PRS 101 / PAO1).